The chain runs to 82 residues: ATP synthase subunit c, chloroplastic (82 aa).

2 helical membrane passes run 7–27 and 57–77; these read GASV…PGIG and LAFM…LLFA.

This sequence belongs to the ATPase C chain family. In terms of assembly, F-type ATPases have 2 components, F(1) - the catalytic core - and F(0) - the membrane proton channel. F(1) has five subunits: alpha(3), beta(3), gamma(1), delta(1), epsilon(1). F(0) has four main subunits: a(1), b(1), b'(1) and c(10-14). The alpha and beta chains form an alternating ring which encloses part of the gamma chain. F(1) is attached to F(0) by a central stalk formed by the gamma and epsilon chains, while a peripheral stalk is formed by the delta, b and b' chains.

Its subcellular location is the plastid. It is found in the chloroplast thylakoid membrane. Functionally, f(1)F(0) ATP synthase produces ATP from ADP in the presence of a proton or sodium gradient. F-type ATPases consist of two structural domains, F(1) containing the extramembraneous catalytic core and F(0) containing the membrane proton channel, linked together by a central stalk and a peripheral stalk. During catalysis, ATP synthesis in the catalytic domain of F(1) is coupled via a rotary mechanism of the central stalk subunits to proton translocation. In terms of biological role, key component of the F(0) channel; it plays a direct role in translocation across the membrane. A homomeric c-ring of between 10-14 subunits forms the central stalk rotor element with the F(1) delta and epsilon subunits. The protein is ATP synthase subunit c, chloroplastic of Emiliania huxleyi (Coccolithophore).